The primary structure comprises 458 residues: GTPase Obg (458 aa).

The region spanning 1-157 is the Obg domain; that stretch reads MSFLDRVKIY…ITLYLELKVL (157 aa). Residues 158-326 form the OBG-type G domain; it reads ADLGLVGFPN…VLNEIVKVIS (169 aa). Residues 164 to 171, 189 to 193, 210 to 213, 280 to 283, and 307 to 309 each bind GTP; these read GFPNAGKS, FTTLN, DIPG, NKAD, and SAA. Residues S171 and T191 each coordinate Mg(2+). The OCT domain maps to 341–419; sequence AVHGVEPLFK…VGQKEFEWSG (79 aa). The segment at 420–458 is disordered; it reads TELDSERAEQPDFEGYKRRTTQAERLEKRRQRRLKKEEK. The segment covering 423–446 has biased composition (basic and acidic residues); the sequence is DSERAEQPDFEGYKRRTTQAERLE. Basic residues predominate over residues 447–458; sequence KRRQRRLKKEEK.

The protein belongs to the TRAFAC class OBG-HflX-like GTPase superfamily. OBG GTPase family. As to quaternary structure, monomer. It depends on Mg(2+) as a cofactor.

Its subcellular location is the cytoplasm. Functionally, an essential GTPase which binds GTP, GDP and possibly (p)ppGpp with moderate affinity, with high nucleotide exchange rates and a fairly low GTP hydrolysis rate. Plays a role in control of the cell cycle, stress response, ribosome biogenesis and in those bacteria that undergo differentiation, in morphogenesis control. The sequence is that of GTPase Obg from Elusimicrobium minutum (strain Pei191).